A 436-amino-acid chain; its full sequence is MDQPFTVNSLKKLAAMPDHTDVSLSPEERVRALSKLGCNITISEDITPRRYFRSGVEMERMASVYLEEGNLENAFVLYNKFITLFVEKLPNHRDYQQCAVPEKQDIMKKLKEIAFPRTDELKNDLLKKYNVEYQEYLQSKNKYKAEILKKLEHQRLIEAERKRIAQMRQQQLESEQFLFFEDQLKKQELARGQMRSQQTSGLSEQIDGSALSCFSTHQNNSLLNVFADQPNKSDATNYASHSPPVNRALTPAATLSAVQNLVVEGLRCVVLPEDLCHKFLQLAESNTVRGIETCGILCGKLTHNEFTITHVIVPKQSAGPDYCDMENVEELFNVQDQHDLLTLGWIHTHPTQTAFLSSVDLHTHCSYQLMLPEAIAIVCSPKHKDTGIFRLTNAGMLEVSACKKKGFHPHTKEPRLFSICKHVLVKDIKIIVLDLR.

M1 carries the N-acetylmethionine modification. Phosphoserine occurs at positions 25 and 242. Residues V269 to L397 form the MPN domain. The Zn(2+) site is built by H347, H349, D360, H362, C402, H408, and H410. Positions H347–D360 match the JAMM motif motif.

The protein belongs to the peptidase M67C family. Zn(2+) is required as a cofactor. Ubiquitously expressed.

With respect to regulation, inhibited by UbV(SP.1), an ubiquitin variant that also inhibits STAMBP. Its function is as follows. Zinc metalloprotease that specifically cleaves 'Lys-63'-linked polyubiquitin chains. Acts as a positive regulator of the TORC1 signaling pathway by mediating 'Lys-63'-linked deubiquitination of SESN2, thereby inhibiting SESN2-interaction with the GATOR2 complex. Does not cleave 'Lys-48'-linked polyubiquitin chains. This chain is AMSH-like protease, found in Homo sapiens (Human).